We begin with the raw amino-acid sequence, 304 residues long: E3 ubiquitin-protein ligase CCNB1IP1 homolog (304 aa).

The segment at 3–42 (CNACWRDLEGRAISTTCGHLLCTEDASKILSNDGACPICD) adopts an RING-type; degenerate zinc-finger fold. Residues 124-184 (TAYQKMGKRC…YESVKRTAIQ (61 aa)) adopt a coiled-coil conformation. The disordered stretch occupies residues 218–279 (SFFSPATPGP…GGGGTANPQS (62 aa)). Residues 235–250 (RQNSSNSGPFDISTDS) are compositionally biased toward polar residues.

As to expression, expressed mostly in flower buds and roots.

The protein resides in the nucleus. It is found in the chromosome. It catalyses the reaction S-ubiquitinyl-[E2 ubiquitin-conjugating enzyme]-L-cysteine + [acceptor protein]-L-lysine = [E2 ubiquitin-conjugating enzyme]-L-cysteine + N(6)-ubiquitinyl-[acceptor protein]-L-lysine.. It participates in protein modification; protein ubiquitination. Ubiquitin E3 ligase required for class I crossover (CO) formation during meiosis. The chain is E3 ubiquitin-protein ligase CCNB1IP1 homolog (HEI10) from Arabidopsis thaliana (Mouse-ear cress).